Reading from the N-terminus, the 273-residue chain is Transcriptional regulator ICP22 homolog (273 aa).

2 disordered regions span residues 1 to 57 and 160 to 273; these read GSCR…YGLP and YEQR…SARR. Over residues 11–33 the composition is skewed to low complexity; that stretch reads PSTSPIIPSLSPSSGGNPSPRSS. Acidic residues-rich tracts occupy residues 178–194 and 204–224; these read EECE…EEEA and SPEE…EDDS. The span at 261–273 shows a compositional bias: low complexity; sequence VPKGGRPAKSARR.

Belongs to the herpesviridae ICP22 family.

The sequence is that of Transcriptional regulator ICP22 homolog from Equus caballus (Horse).